Consider the following 424-residue polypeptide: Glutamate-1-semialdehyde 2,1-aminomutase (424 aa).

Lysine 263 is modified (N6-(pyridoxal phosphate)lysine).

The protein belongs to the class-III pyridoxal-phosphate-dependent aminotransferase family. HemL subfamily. Homodimer. Requires pyridoxal 5'-phosphate as cofactor.

The protein localises to the cytoplasm. It catalyses the reaction (S)-4-amino-5-oxopentanoate = 5-aminolevulinate. It functions in the pathway porphyrin-containing compound metabolism; protoporphyrin-IX biosynthesis; 5-aminolevulinate from L-glutamyl-tRNA(Glu): step 2/2. The polypeptide is Glutamate-1-semialdehyde 2,1-aminomutase (Campylobacter jejuni subsp. jejuni serotype O:23/36 (strain 81-176)).